The sequence spans 1050 residues: Bifunctional glutamine synthetase adenylyltransferase/adenylyl-removing enzyme (1050 aa).

The adenylyl removase stretch occupies residues 1–531 (MTDPLIHTRK…LHSQLFYRPL (531 aa)). An adenylyl transferase region spans residues 537–1050 (NLSVDAMKLS…LDSVEARREL (514 aa)).

The protein belongs to the GlnE family. The cofactor is Mg(2+).

It carries out the reaction [glutamine synthetase]-O(4)-(5'-adenylyl)-L-tyrosine + phosphate = [glutamine synthetase]-L-tyrosine + ADP. The catalysed reaction is [glutamine synthetase]-L-tyrosine + ATP = [glutamine synthetase]-O(4)-(5'-adenylyl)-L-tyrosine + diphosphate. Its function is as follows. Involved in the regulation of glutamine synthetase GlnA, a key enzyme in the process to assimilate ammonia. When cellular nitrogen levels are high, the C-terminal adenylyl transferase (AT) inactivates GlnA by covalent transfer of an adenylyl group from ATP to specific tyrosine residue of GlnA, thus reducing its activity. Conversely, when nitrogen levels are low, the N-terminal adenylyl removase (AR) activates GlnA by removing the adenylyl group by phosphorolysis, increasing its activity. The regulatory region of GlnE binds the signal transduction protein PII (GlnB) which indicates the nitrogen status of the cell. The polypeptide is Bifunctional glutamine synthetase adenylyltransferase/adenylyl-removing enzyme (Corynebacterium efficiens (strain DSM 44549 / YS-314 / AJ 12310 / JCM 11189 / NBRC 100395)).